The primary structure comprises 245 residues: GATA zinc finger domain-containing protein 1 (245 aa).

The segment at 9-33 (CSMCKTNTSSMWKKGSQGEILCNNC) adopts a GATA-type zinc-finger fold. The segment covering 39–70 (TAAGGNNNNNSSSSTSGSSSYTGTTFASTSTS) has biased composition (low complexity). The tract at residues 39 to 110 (TAAGGNNNNN…PAAEKKVSTK (72 aa)) is disordered. The segment covering 71 to 80 (QQSNGGNTKQ) has biased composition (polar residues).

It is found in the nucleus. Component of some chromatin complex recruited to chromatin sites methylated 'Lys-4' of histone H3 (H3K4me), with a preference for trimethylated form (H3K4me3). This chain is GATA zinc finger domain-containing protein 1 (gatad1), found in Xenopus laevis (African clawed frog).